A 525-amino-acid polypeptide reads, in one-letter code: D-aminopeptidase (525 aa).

Catalysis depends on Ser-62, which acts as the Nucleophile. The active-site Proton donor/acceptor is Lys-65. The segment at 485-495 is important for specificity; sequence PRALDHTAPGD. Substrate is bound at residue Asp-489.

The protein belongs to the peptidase S12 family. As to quaternary structure, homodimer.

The enzyme catalyses Release of an N-terminal D-amino acid from a peptide, Xaa-|-Yaa-, in which Xaa is preferably D-Ala, D-Ser or D-Thr. D-amino acid amides and methyl esters also are hydrolyzed, as is glycine amide.. With respect to regulation, inhibited by beta-lactam compounds such as 6-aminopenicillic acid, 7-aminocephalosporanic acid, benzylpenicillin and ampicillin. Inhibited by p-chloromercuribenzoate. Hydrolyzes N-terminal residues in D-amino acid-containing peptides. This chain is D-aminopeptidase, found in Gluconobacter oxydans (strain 621H) (Gluconobacter suboxydans).